The primary structure comprises 304 residues: Oxygen-dependent coproporphyrinogen-III oxidase (304 aa).

Residue serine 94 coordinates substrate. Residues histidine 98 and histidine 108 each coordinate a divalent metal cation. The active-site Proton donor is histidine 108. Substrate is bound at residue 110–112; it reads NVR. A divalent metal cation contacts are provided by histidine 147 and histidine 177. An important for dimerization region spans residues 242-277; sequence YVEFNLVYDRGTLFGLQTGGRTESILMSMPPLVRWE. 260–262 lines the substrate pocket; the sequence is GGR.

The protein belongs to the aerobic coproporphyrinogen-III oxidase family. As to quaternary structure, homodimer. A divalent metal cation is required as a cofactor.

It localises to the cytoplasm. The enzyme catalyses coproporphyrinogen III + O2 + 2 H(+) = protoporphyrinogen IX + 2 CO2 + 2 H2O. It participates in porphyrin-containing compound metabolism; protoporphyrin-IX biosynthesis; protoporphyrinogen-IX from coproporphyrinogen-III (O2 route): step 1/1. Its function is as follows. Involved in the heme biosynthesis. Catalyzes the aerobic oxidative decarboxylation of propionate groups of rings A and B of coproporphyrinogen-III to yield the vinyl groups in protoporphyrinogen-IX. This chain is Oxygen-dependent coproporphyrinogen-III oxidase, found in Shewanella piezotolerans (strain WP3 / JCM 13877).